A 906-amino-acid chain; its full sequence is Protein translocase subunit SecA (906 aa).

ATP is bound by residues Gln-90, 108 to 112 (GEGKT), and Asp-503. Positions 845–882 (TAAEAPASVPQPQAAVAPQPAPELVGADNGESQPQAWG) are disordered. Over residues 846 to 862 (AAEAPASVPQPQAAVAP) the composition is skewed to low complexity. 4 residues coordinate Zn(2+): Cys-890, Cys-892, Cys-901, and His-902.

The protein belongs to the SecA family. In terms of assembly, monomer and homodimer. Part of the essential Sec protein translocation apparatus which comprises SecA, SecYEG and auxiliary proteins SecDF-YajC and YidC. It depends on Zn(2+) as a cofactor.

It localises to the cell inner membrane. The protein localises to the cytoplasm. It carries out the reaction ATP + H2O + cellular proteinSide 1 = ADP + phosphate + cellular proteinSide 2.. Part of the Sec protein translocase complex. Interacts with the SecYEG preprotein conducting channel. Has a central role in coupling the hydrolysis of ATP to the transfer of proteins into and across the cell membrane, serving both as a receptor for the preprotein-SecB complex and as an ATP-driven molecular motor driving the stepwise translocation of polypeptide chains across the membrane. This chain is Protein translocase subunit SecA, found in Cereibacter sphaeroides (strain ATCC 17025 / ATH 2.4.3) (Rhodobacter sphaeroides).